A 255-amino-acid polypeptide reads, in one-letter code: EEF1A lysine methyltransferase 4 (255 aa).

The S-adenosyl-L-methionine site is built by Trp26 and Tyr30. Tyr39 bears the Phosphotyrosine mark. S-adenosyl-L-methionine contacts are provided by residues Trp41, Gly66, 88-89, 113-114, and Lys130; these read DY and DV. Positions 129-134 match the Required for methyltransferase activity motif; the sequence is EKGTLD.

This sequence belongs to the methyltransferase superfamily.

It catalyses the reaction L-lysyl-[protein] + S-adenosyl-L-methionine = N(6)-methyl-L-lysyl-[protein] + S-adenosyl-L-homocysteine + H(+). It carries out the reaction N(6)-methyl-L-lysyl-[protein] + S-adenosyl-L-methionine = N(6),N(6)-dimethyl-L-lysyl-[protein] + S-adenosyl-L-homocysteine + H(+). The catalysed reaction is N(6),N(6)-dimethyl-L-lysyl-[protein] + S-adenosyl-L-methionine = N(6),N(6),N(6)-trimethyl-L-lysyl-[protein] + S-adenosyl-L-homocysteine + H(+). Protein-lysine methyltransferase that efficiently catalyzes three successive methylations on 'Lys-36' in eukaryotic translation elongation factor 1 alpha (EEF1A1 or EEF1A2). The protein is EEF1A lysine methyltransferase 4 of Mus musculus (Mouse).